Consider the following 138-residue polypeptide: MEEEAETEEQQRFSYQQRLKAAVHYTVGCLCEEVALDKEMQFSKQTIAAISELTFRQCENFAKDLEMFARHAKRTTINTEDVKLLARRSNSLLKYITDKSEEIAQINLERKAQKKKKSEDGSKNSRQPAEAGVVESEN.

Met-1 is modified (N-acetylmethionine). Positions 110–138 (RKAQKKKKSEDGSKNSRQPAEAGVVESEN) are disordered.

It belongs to the TAF9 family. CENP-S/MHF1 subfamily. As to quaternary structure, heterodimer with CENPX, sometimes called MHF; this interaction stabilizes both partners. MHF heterodimers can assemble to form tetrameric structures. MHF also coassemble with CENPT-CENPW heterodimers at centromeres to form the tetrameric CENP-T-W-S-X complex. Forms a discrete complex with FANCM and CENPX, called FANCM-MHF; this interaction, probably mediated by direct binding between CENPS and FANCM, leads to synergistic activation of double-stranded DNA binding and strongly stimulates FANCM-mediated DNA remodeling. Recruited by FANCM to the Fanconi anemia (FA) core complex, which consists of CENPS, CENPX, FANCA, FANCB, FANCC, FANCE, FANCF, FANCG, FANCL, FANCM, FAAP24 and FAAP100. The FA core complex associates with Bloom syndrome (BLM) complex, which consists of at least BLM, DNA topoisomerase 3-alpha (TOP3A), RMI1/BLAP75, RPA1/RPA70 and RPA2/RPA32. The super complex between FA and BLM is called BRAFT. Component of the CENPA-CAD complex, composed of CENPI, CENPK, CENPL, CENPO, CENPP, CENPQ, CENPR and CENPS. The CENPA-CAD complex is probably recruited on centromeres by the CENPA-NAC complex, composed of at least CENPA, CENPC, CENPH, CENPM, CENPN, CENPT and CENPU. In terms of tissue distribution, ubiquitously expressed.

The protein resides in the nucleus. It is found in the chromosome. It localises to the centromere. The protein localises to the kinetochore. Functionally, DNA-binding component of the Fanconi anemia (FA) core complex. Required for the normal activation of the FA pathway, leading to monoubiquitination of the FANCI-FANCD2 complex in response to DNA damage, cellular resistance to DNA cross-linking drugs, and prevention of chromosomal breakage. In complex with CENPX (MHF heterodimer), crucial cofactor for FANCM in both binding and ATP-dependent remodeling of DNA. Stabilizes FANCM. In complex with CENPX and FANCM (but not other FANC proteins), rapidly recruited to blocked forks and promotes gene conversion at blocked replication forks. In complex with CENPT, CENPW and CENPX (CENP-T-W-S-X heterotetramer), involved in the formation of a functional kinetochore outer plate, which is essential for kinetochore-microtubule attachment and faithful mitotic progression. As a component of MHF and CENP-T-W-S-X complexes, binds DNA and bends it to form a nucleosome-like structure. DNA-binding function is fulfilled in the presence of CENPX, with the following preference for DNA substates: Holliday junction &gt; double-stranded &gt; splay arm &gt; single-stranded. Does not bind DNA on its own. The chain is Centromere protein S (CENPS) from Homo sapiens (Human).